We begin with the raw amino-acid sequence, 163 residues long: Olfactory marker protein (163 aa).

At Ala-2 the chain carries N-acetylalanine.

It belongs to the olfactory marker protein family. In terms of assembly, interacts with BEX1 and BEX2. Uniquely associated with mature olfactory receptor neurons.

It localises to the cytoplasm. Its function is as follows. May act as a modulator of the olfactory signal-transduction cascade. This chain is Olfactory marker protein (Omp), found in Rattus norvegicus (Rat).